The chain runs to 405 residues: Type II secretion system protein F (405 aa).

Over 1 to 169 (MPLYRYKALD…SRALKGKVIN (169 aa)) the chain is Cytoplasmic. The Ca(2+) site is built by aspartate 98, glutamine 151, and aspartate 155. Residues 170–190 (ALIYPAILLAVVGCALLFLLG) form a helical membrane-spanning segment. Over 191-218 (YVVPQFAQMYESLDVALPWFTQAVLSVG) the chain is Periplasmic. Residues 219-239 (LLVRDWWLVLVVIPGVLGLWL) traverse the membrane as a helical segment. Residues 240 to 370 (DRKRRNAAFR…LETAQAIDRA (131 aa)) are Cytoplasmic-facing. Residues 371 to 391 (LAALVPLITLVLASVVGLVII) form a helical membrane-spanning segment. The Periplasmic portion of the chain corresponds to 392–405 (SVLVPLYDLTNAIG).

The protein belongs to the GSP F family. As to quaternary structure, type II secretion system is composed of four main components: the outer membrane complex, the inner membrane complex, the cytoplasmic secretion ATPase and the periplasm-spanning pseudopilus. Homodimer. Interacts with XpsE and XpsL components.

The protein resides in the cell inner membrane. Component of the type II secretion system inner membrane complex required for the energy-dependent secretion of extracellular factors such as proteases and toxins from the periplasm. The protein is Type II secretion system protein F (xpsF) of Xanthomonas campestris pv. campestris (strain ATCC 33913 / DSM 3586 / NCPPB 528 / LMG 568 / P 25).